Reading from the N-terminus, the 717-residue chain is MASHANASGGGGDEEMVEASTLRHRHGAGKDANGVGTERQLAAAAAEGEEEGPSSVERAFVDRAVPSWREQLTVRAFVVSFFLSIMFSIIVMKLNLTTGIIPSLNVSAGLLGFFFVRLWTAAIERVGLLRQPFTRQENTVIQTCVVAAYGIAFSGGFGTYLFGMSETIAKQATEANNAQNVKNPHIGWMIGFLFLVSFIGLLALVPLRKIMIVDYKLTYPSGTATAYLINGFHTPEGAKLAKKQVKELGKFFLFSFVWGFFQWFYTAGDGCGFQSFPTLGLQAYKNRFYFDFSPTYVGVGMICPHIVNVSVLLGGILSWGIMWPLIRNKKGSWYAASLSETSLHGLQGYRVFISIALILGDGLYNFVKVLIRTTAGFVVMMKKNSTLPVSNNGSPMVATEAISFDDERRTELFLKDQIPKTVAFGGYVAVAAVSIGTLPQIFPQLKWYYILVAYVFAPVLAFCNAYGAGLTDWSLASTYGKLAIFIFGAWAGASNGGVLVGLAACGVMMSIVSTASDLMQDFKTGYLTLASPRSMFVSQVIGTAMGCVIAPCVFWLFYKAFADIGVSGTEYPAPYAIVYRNMAILGVDGFSSLPKHCLTLCYIFFAAAIAINLARDLAPSKVARFIPLPMAMAIPFYIGSYFAIDMFIGTVILFVWEMVNKAKAEAFAPAVASGLICGDGIWTLPQSILALAKVKPPICMKFLSRSVNAQVDGFLGN.

A disordered region spans residues 1–56; that stretch reads MASHANASGGGGDEEMVEASTLRHRHGAGKDANGVGTERQLAAAAAEGEEEGPSSV. 14 consecutive transmembrane segments (helical) span residues 76–96, 99–119, 144–164, 186–206, 248–268, 306–326, 351–371, 422–442, 450–470, 482–502, 536–556, 593–613, 636–656, and 671–691; these read AFVVSFFLSIMFSIIVMKLNL, GIIPSLNVSAGLLGFFFVRLW, CVVAAYGIAFSGGFGTYLFGM, IGWMIGFLFLVSFIGLLALVP, LGKFFLFSFVWGFFQWFYTAG, IVNVSVLLGGILSWGIMWPLI, VFISIALILGDGLYNFVKVLI, VAFGGYVAVAAVSIGTLPQIF, ILVAYVFAPVLAFCNAYGAGL, LAIFIFGAWAGASNGGVLVGL, FVSQVIGTAMGCVIAPCVFWL, LPKHCLTLCYIFFAAAIAINL, FYIGSYFAIDMFIGTVILFVW, and VASGLICGDGIWTLPQSILAL.

The protein belongs to the YSL (TC 2.A.67.2) family. Expressed in root cortex and stele.

Its subcellular location is the membrane. Its function is as follows. May be involved in the transport of nicotianamine-chelated metals. This chain is Probable metal-nicotianamine transporter YSL12 (YSL12), found in Oryza sativa subsp. japonica (Rice).